Here is an 86-residue protein sequence, read N- to C-terminus: MPSDSKKPTIIYPCLWDYRVIMTTKDTSTLKELLETYQRPFKLEFKNTSKNAKFYSFNVSMEVSNESERNEIFQKISQLDKVVQTL.

The protein to C.jejuni CJ0253.

This is an uncharacterized protein from Helicobacter pylori (strain ATCC 700392 / 26695) (Campylobacter pylori).